The chain runs to 949 residues: ATPase 1, plasma membrane-type (949 aa).

An N-acetylserine modification is found at serine 2. The Cytoplasmic portion of the chain corresponds to 2–61; it reads SGLEDIKNETVDLEKIPIEEVFQQLKCTREGLTTQEGEDRIVIFGPNKLEEKKESKILKF. Residues 62–81 form a helical membrane-spanning segment; sequence LGFMWNPLSWVMEAAALMAI. Residues 82–93 lie on the Extracellular side of the membrane; it reads ALANGDNRPPDW. The helical transmembrane segment at 94-114 threads the bilayer; it reads QDFVGIICLLVINSTISFIEE. Residues 115–243 lie on the Cytoplasmic side of the membrane; it reads NNAGNAAAAL…GHFQKVLTSI (129 aa). A helical membrane pass occupies residues 244–264; that stretch reads GNFCICSIAIGIAIEIVVMYP. Topologically, residues 265–273 are extracellular; the sequence is IQHRKYRDG. The helical transmembrane segment at 274 to 291 threads the bilayer; it reads IDNLLVLLIGGIPIAMPT. The Cytoplasmic segment spans residues 292 to 643; that stretch reads VLSVTMAIGS…TSRAIFQRMK (352 aa). Residue aspartate 329 is the 4-aspartylphosphate intermediate of the active site. Mg(2+) is bound by residues aspartate 588 and aspartate 592. A helical transmembrane segment spans residues 644–665; sequence NYTIYAVSITIRIVFGFMLIAL. Over 666–670 the chain is Extracellular; that stretch reads IWEFD. The helical transmembrane segment at 671-693 threads the bilayer; sequence FSAFMVLIIAILNDGTIMTISKD. Topologically, residues 694–709 are cytoplasmic; that stretch reads RVKPSPTPDSWKLKEI. Residues 710 to 730 form a helical membrane-spanning segment; it reads FATGIVLGGYQAIMSVIFFWA. Residues 731–751 lie on the Extracellular side of the membrane; sequence AHKTDFFSDKFGVRSIRDNND. A helical transmembrane segment spans residues 752-772; that stretch reads ELMGAVYLQVSIISQALIFVT. Residues 773–784 lie on the Cytoplasmic side of the membrane; it reads RSRSWSFVERPG. The chain crosses the membrane as a helical span at residues 785-805; it reads ALLMIAFVIAQLVATLIAVYA. Topologically, residues 806–813 are extracellular; the sequence is DWTFAKVK. The helical transmembrane segment at 814 to 834 threads the bilayer; it reads GIGWGWAGVIWIYSIVTYFPQ. Over 835-949 the chain is Cytoplasmic; it reads DILKFAIRYI…IDTAGHHYTV (115 aa). At threonine 881 the chain carries Phosphothreonine. 2 positions are modified to phosphoserine: serine 899 and serine 931. The tract at residues 947-949 is interaction with 14-3-3 proteins; that stretch reads YTV. Threonine 948 is modified (phosphothreonine).

This sequence belongs to the cation transport ATPase (P-type) (TC 3.A.3) family. Type IIIA subfamily. In terms of assembly, binds to 14-3-3 proteins. The binding is induced by phosphorylation of Thr-948. Binding to 14-3-3 proteins activates the H(+)-ATPase. Interacts with PPI1; this interaction promotes ATPase activity. Interacts with PSY1R. Part of a functional complex containing PSKR1, BAK1, CNGC17, and AHA. Interacts with CNGC17 and PSKR1. Triggered by SAUR9 via the phosphorylation of the C-terminal autoinhibitory domain. Interacts with AHA2. Binds to CBC1 and CBC2. Post-translationally, phosphorylated, probably by PHOT1 and PHOT2, at C-terminal Thr-948 in guard cells in response to blue light to induce stomatal opening. In terms of tissue distribution, expressed in guard cells, mesophyll cells, leaves and roots.

It localises to the cell membrane. The catalysed reaction is ATP + H2O + H(+)(in) = ADP + phosphate + 2 H(+)(out). Phosphorylation on Thr residues is repressed by tyrphostin 9, sphingosine, GW5074 and BML-265. By contrast, the fungal phytotoxin fusicoccin (FC) promotes phosphorylation of Thr-948 independently to BHP, thus leading to large stomatal opening. The plasma membrane H(+) ATPase of plants and fungi generates a proton gradient that drives the active transport of nutrients by H(+)-symport. The resulting external acidification and/or internal alkinization may mediate growth responses. Forms a functional cation-translocating unit with CNGC17 that is activated by PSKR1/BAK1 and possibly other BAK1/RLK complexes. Promotes stomatal opening in response to blue light. The protein is ATPase 1, plasma membrane-type of Arabidopsis thaliana (Mouse-ear cress).